We begin with the raw amino-acid sequence, 877 residues long: DNA (cytosine-5)-methyltransferase 3A (877 aa).

Disordered regions lie at residues 1–154, 194–250, and 412–431; these read MVES…MQRH, EETP…PEYE, and AYAPPPPAKKPRKSTTEKPK. 2 stretches are compositionally biased toward basic and acidic residues: residues 107-133 and 195-206; these read KLLEATEKSKEEKEENNFDSLKMEGSR and ETPRAEPQKEEE. Residues 210–225 are compositionally biased toward polar residues; it reads PASQQPTDPASPNVAT. One can recognise a PWWP domain in the interval 226 to 284; it reads TPEPVVADAVDKNTSKSADDEPEYEDGRGLGIGELVWGKLRGFSWWPGRIVSWWMTGRS. A compositionally biased stretch (basic and acidic residues) spans 234–244; it reads AVDKNTSKSAD. One can recognise an ADD domain in the interval 447–579; sequence EVRQKCRNIE…LQMFFANNHD (133 aa). A GATA-type; atypical zinc finger spans residues 458–488; the sequence is ICISCGSLNVTLEHPLFIGGMCQNCKNCFLE. The PHD-type; atypical zinc finger occupies 499–555; sequence QSYCTICCGGREVLMCGNNNCCRCFCVECVDLLVGPGAAQAAIKEDPWNCYMCGHKG. The SAM-dependent MTase C5-type domain maps to 599–877; the sequence is IRVLSLFDGI…APLKEYFACV (279 aa). S-adenosyl-L-methionine is bound by residues 606–610, E629, and 651–653; these read DGIAT and DVR. C675 is an active-site residue. 856 to 858 provides a ligand contact to S-adenosyl-L-methionine; that stretch reads RSW.

The protein belongs to the class I-like SAM-binding methyltransferase superfamily. C5-methyltransferase family.

Its subcellular location is the nucleus. It localises to the chromosome. The protein resides in the cytoplasm. The catalysed reaction is a 2'-deoxycytidine in DNA + S-adenosyl-L-methionine = a 5-methyl-2'-deoxycytidine in DNA + S-adenosyl-L-homocysteine + H(+). It catalyses the reaction L-cysteinyl-[protein] + S-adenosyl-L-methionine = S-methyl-L-cysteinyl-[protein] + S-adenosyl-L-homocysteine + H(+). Its function is as follows. Required for genome-wide de novo methylation and is essential for development. DNA methylation is coordinated with methylation of histones. It modifies DNA in a non-processive manner and also methylates non-CpG sites. Acts as a transcriptional corepressor for ZNF238. Can actively repress transcription through the recruitment of HDAC activity. Also has weak auto-methylation activity on some Cys residue in absence of DNA. This chain is DNA (cytosine-5)-methyltransferase 3A (DNMT3A), found in Gallus gallus (Chicken).